Here is a 123-residue protein sequence, read N- to C-terminus: MAREGSRKLGQHYEGVAARYLESKGIRIIERNVHNRGGEIDLIGMDAEALVFFEVRFRADGALVDPISSVSAVKQQRLVRAASFYLHRHGLWDRVSRIDVIGITPGHSSKYRIQWIKNAIQAD.

This sequence belongs to the UPF0102 family.

This Marinobacter nauticus (strain ATCC 700491 / DSM 11845 / VT8) (Marinobacter aquaeolei) protein is UPF0102 protein Maqu_2464.